Consider the following 446-residue polypeptide: Bifunctional protein GlmU (446 aa).

The segment at 1–226 (MLAVAILAAG…PDEVNGINDR (226 aa)) is pyrophosphorylase. UDP-N-acetyl-alpha-D-glucosamine contacts are provided by residues 7–10 (LAAG), Lys21, Gln73, and 78–79 (GT). Mg(2+) is bound at residue Asp103. UDP-N-acetyl-alpha-D-glucosamine contacts are provided by Gly140, Glu155, Asn170, and Asn224. Asn224 provides a ligand contact to Mg(2+). The linker stretch occupies residues 227-247 (CQLANCEALLQERLRNYWMKE). Positions 248–446 (GVTFTDPASC…SKQLIKNGWQ (199 aa)) are N-acetyltransferase. UDP-N-acetyl-alpha-D-glucosamine contacts are provided by Arg329 and Lys347. The active-site Proton acceptor is the His359. UDP-N-acetyl-alpha-D-glucosamine contacts are provided by Tyr362 and Asn373. Acetyl-CoA-binding positions include Ala376, 382 to 383 (NY), Ala419, and Arg436.

This sequence in the N-terminal section; belongs to the N-acetylglucosamine-1-phosphate uridyltransferase family. In the C-terminal section; belongs to the transferase hexapeptide repeat family. Homotrimer. It depends on Mg(2+) as a cofactor.

The protein resides in the cytoplasm. It catalyses the reaction alpha-D-glucosamine 1-phosphate + acetyl-CoA = N-acetyl-alpha-D-glucosamine 1-phosphate + CoA + H(+). It carries out the reaction N-acetyl-alpha-D-glucosamine 1-phosphate + UTP + H(+) = UDP-N-acetyl-alpha-D-glucosamine + diphosphate. It participates in nucleotide-sugar biosynthesis; UDP-N-acetyl-alpha-D-glucosamine biosynthesis; N-acetyl-alpha-D-glucosamine 1-phosphate from alpha-D-glucosamine 6-phosphate (route II): step 2/2. Its pathway is nucleotide-sugar biosynthesis; UDP-N-acetyl-alpha-D-glucosamine biosynthesis; UDP-N-acetyl-alpha-D-glucosamine from N-acetyl-alpha-D-glucosamine 1-phosphate: step 1/1. The protein operates within bacterial outer membrane biogenesis; LPS lipid A biosynthesis. Functionally, catalyzes the last two sequential reactions in the de novo biosynthetic pathway for UDP-N-acetylglucosamine (UDP-GlcNAc). The C-terminal domain catalyzes the transfer of acetyl group from acetyl coenzyme A to glucosamine-1-phosphate (GlcN-1-P) to produce N-acetylglucosamine-1-phosphate (GlcNAc-1-P), which is converted into UDP-GlcNAc by the transfer of uridine 5-monophosphate (from uridine 5-triphosphate), a reaction catalyzed by the N-terminal domain. This chain is Bifunctional protein GlmU, found in Prochlorococcus marinus (strain MIT 9313).